A 466-amino-acid polypeptide reads, in one-letter code: GTPase Der (466 aa).

2 consecutive EngA-type G domains span residues 3–166 (PVIA…PEIP) and 177–350 (IKIA…QSAT). GTP is bound by residues 9–16 (GRPNVGKS), 56–60 (DTGGI), 118–121 (NKID), 183–190 (GRPNVGKS), 230–234 (DTAGV), and 295–298 (NKWD). Residues 351–435 (DRFSTNYLTR…PIRIEFRTTD (85 aa)) form the KH-like domain. Residues 442–466 (KKSMTRQQFIQKRRKEERDRNNPRR) are disordered. The segment covering 455–466 (RKEERDRNNPRR) has biased composition (basic and acidic residues).

This sequence belongs to the TRAFAC class TrmE-Era-EngA-EngB-Septin-like GTPase superfamily. EngA (Der) GTPase family. In terms of assembly, associates with the 50S ribosomal subunit.

GTPase that plays an essential role in the late steps of ribosome biogenesis. This Cellvibrio japonicus (strain Ueda107) (Pseudomonas fluorescens subsp. cellulosa) protein is GTPase Der.